The chain runs to 404 residues: DNA replication and repair protein RecF (404 aa).

An ATP-binding site is contributed by 30-37 (GSNGQGKT).

The protein belongs to the RecF family.

The protein resides in the cytoplasm. Its function is as follows. The RecF protein is involved in DNA metabolism; it is required for DNA replication and normal SOS inducibility. RecF binds preferentially to single-stranded, linear DNA. It also seems to bind ATP. This Clavibacter michiganensis subsp. michiganensis (strain NCPPB 382) protein is DNA replication and repair protein RecF.